Here is a 355-residue protein sequence, read N- to C-terminus: 3'-5' exonuclease (355 aa).

The tract at residues M1 to K121 is disordered. 3 stretches are compositionally biased toward basic and acidic residues: residues V17–P29, A36–T50, and K72–P92. Phosphoserine occurs at positions 105 and 113. Residues V147 to Q315 enclose the 3'-5' exonuclease domain. Residues D164, E166, and D302 each contribute to the Mg(2+) site.

This sequence belongs to the WRNexo family.

The protein localises to the nucleus. Its function is as follows. Has exonuclease activity on both single-stranded and duplex templates bearing overhangs, but not blunt ended duplex DNA, and cleaves in a 3'-5' direction. Essential for the formation of DNA replication focal centers. Has an important role in maintaining genome stability. This is 3'-5' exonuclease from Drosophila ananassae (Fruit fly).